The sequence spans 491 residues: Protein nucleotidyltransferase YdiU (491 aa).

ATP is bound by residues Gly-94, Gly-96, Arg-97, Lys-117, Asp-129, Gly-130, Arg-180, and Arg-187. The Proton acceptor role is filled by Asp-256. Residues Asn-257 and Asp-266 each contribute to the Mg(2+) site. Asp-266 is a binding site for ATP.

It belongs to the SELO family. It depends on Mg(2+) as a cofactor. Mn(2+) is required as a cofactor.

It catalyses the reaction L-seryl-[protein] + ATP = 3-O-(5'-adenylyl)-L-seryl-[protein] + diphosphate. The catalysed reaction is L-threonyl-[protein] + ATP = 3-O-(5'-adenylyl)-L-threonyl-[protein] + diphosphate. It carries out the reaction L-tyrosyl-[protein] + ATP = O-(5'-adenylyl)-L-tyrosyl-[protein] + diphosphate. The enzyme catalyses L-histidyl-[protein] + UTP = N(tele)-(5'-uridylyl)-L-histidyl-[protein] + diphosphate. It catalyses the reaction L-seryl-[protein] + UTP = O-(5'-uridylyl)-L-seryl-[protein] + diphosphate. The catalysed reaction is L-tyrosyl-[protein] + UTP = O-(5'-uridylyl)-L-tyrosyl-[protein] + diphosphate. Functionally, nucleotidyltransferase involved in the post-translational modification of proteins. It can catalyze the addition of adenosine monophosphate (AMP) or uridine monophosphate (UMP) to a protein, resulting in modifications known as AMPylation and UMPylation. This Clostridium botulinum (strain Okra / Type B1) protein is Protein nucleotidyltransferase YdiU.